Here is a 144-residue protein sequence, read N- to C-terminus: uncharacterized protein (144 aa).

A disordered region spans residues 90–144; it reads KKEYSALKKSGKIHKVGGSKSSGHRKTKKPKKSMKGGSKTKKLSEKQLMKELLAM. Basic residues predominate over residues 98 to 130; that stretch reads KSGKIHKVGGSKSSGHRKTKKPKKSMKGGSKTK.

This is an uncharacterized protein from Sputnik virophage.